Reading from the N-terminus, the 349-residue chain is Trans-enoyl reductase phmE (349 aa).

55-58 (CDWK) is an NADP(+) binding site. A substrate-binding site is contributed by 143–150 (TGIGTMGL). Residues 182–185 (SPKN), Tyr200, and 247–248 (LE) each bind NADP(+). 267 to 271 (GMAIL) is a substrate binding site. Residue 336 to 337 (VS) participates in NADP(+) binding.

This sequence belongs to the zinc-containing alcohol dehydrogenase family. As to quaternary structure, monomer.

It participates in mycotoxin biosynthesis. In terms of biological role, trans-enoyl reductase; part of the gene cluster that mediates the biosynthesis of the mycotoxins phomacins, leucine-derived cytochalasans with potent actin polymerization-inhibitory activities and monocot-specific antigerminative activities. The first step in the pathway is catalyzed by the hybrid PKS-NRPS phmA, assisted by the enoyl reductase phmE, that are responsible for fusion of the leucine precursor and the polyketide backbone to produce a 2-pyrrolidone intermediate. The polyketide synthase module (PKS) of phmA is responsible for the synthesis of the polyketide backbone and the downstream nonribosomal peptide synthetase (NRPS) amidates the carboxyl end of the polyketide with the leucine precursor. Because phmA lacks a designated enoylreductase (ER) domain, the required activity is provided the enoyl reductase phmE. Reduction by the hydrolyase phmG, followed by dehydration and intra-molecular Diels-Alder cyclization by the Diels-Alderase phmD then yield the required isoindolone-fused macrocycle. A number of oxidative steps catalyzed by the tailoring cytochrome P450 monooxygenase phmB, the FAD-linked oxidoreductase phmC and the short-chain dehydrogenase/reductase phmF, are further required to afford the final products, phomacin D and phomacin E. The chain is Trans-enoyl reductase phmE from Phaeosphaeria nodorum (strain SN15 / ATCC MYA-4574 / FGSC 10173) (Glume blotch fungus).